The sequence spans 294 residues: Lipoprotein NlpI (294 aa).

A signal peptide spans 1-18; sequence MKPFLRWCFVATALTLAG. Residue cysteine 19 is the site of N-palmitoyl cysteine attachment. The S-diacylglycerol cysteine moiety is linked to residue cysteine 19. TPR repeat units follow at residues 62-95, 96-129, and 234-267; these read AQLL…RPDM, PEVF…DPTY, and SETN…NVHN.

In terms of assembly, homodimer.

Its subcellular location is the cell membrane. Its function is as follows. May be involved in cell division. May play a role in bacterial septation or regulation of cell wall degradation during cell division. The chain is Lipoprotein NlpI (nlpI) from Shigella boydii serotype 4 (strain Sb227).